Here is a 167-residue protein sequence, read N- to C-terminus: Lipoprotein signal peptidase (167 aa).

3 helical membrane passes run 12 to 32, 68 to 88, and 99 to 119; these read WLWL…AVVK, WQRW…IHWL, and GIAY…RLVL. Catalysis depends on residues D124 and D142. Residues 137-157 form a helical membrane-spanning segment; that stretch reads AFNLADSFIFIGAAMIVLDGF.

The protein belongs to the peptidase A8 family.

It localises to the cell inner membrane. It carries out the reaction Release of signal peptides from bacterial membrane prolipoproteins. Hydrolyzes -Xaa-Yaa-Zaa-|-(S,diacylglyceryl)Cys-, in which Xaa is hydrophobic (preferably Leu), and Yaa (Ala or Ser) and Zaa (Gly or Ala) have small, neutral side chains.. The protein operates within protein modification; lipoprotein biosynthesis (signal peptide cleavage). Its function is as follows. This protein specifically catalyzes the removal of signal peptides from prolipoproteins. This Aeromonas hydrophila subsp. hydrophila (strain ATCC 7966 / DSM 30187 / BCRC 13018 / CCUG 14551 / JCM 1027 / KCTC 2358 / NCIMB 9240 / NCTC 8049) protein is Lipoprotein signal peptidase.